A 558-amino-acid chain; its full sequence is SPATS2-like protein (558 aa).

Ala2 is modified (N-acetylalanine). The span at 63 to 79 (GKKKNNKRKRSKSKQHQ) shows a compositional bias: basic residues. A disordered region spans residues 63–204 (GKKKNNKRKR…SPVKSNAPAA (142 aa)). Basic and acidic residues-rich tracts occupy residues 80 to 92 (GNKDAKDKVERPE) and 110 to 142 (GCEKDSSSPDSTREKLALTPREKKISILEEPPR). Ser120 is modified (phosphoserine). A coiled-coil region spans residues 279–344 (KEEAMDILTA…ARFSCDIEQL (66 aa)). Disordered stretches follow at residues 385-406 (GNFARKSSGHNKPSEGKAANPK) and 421-514 (TMPT…RQHA). Residues 421–433 (TMPTNKQQNGPSS) show a composition bias toward polar residues. Residues 469–485 (HEHRRQPHNGFRPKNKG) are compositionally biased toward basic residues.

Belongs to the SPATS2 family.

The protein localises to the cytoplasm. The protein resides in the nucleus. It localises to the nucleolus. In Mus musculus (Mouse), this protein is SPATS2-like protein (Spats2l).